The primary structure comprises 973 residues: DENN domain-containing protein C297.05 (973 aa).

Residues Ala-69–Val-79 show a composition bias toward polar residues. A disordered region spans residues Ala-69–Pro-136. Residues Ser-134 and Ser-318 each carry the phosphoserine modification. The 259-residue stretch at Ala-169–Pro-427 folds into the uDENN domain. Residues Val-449–Lys-586 enclose the cDENN domain. One can recognise a dDENN domain in the interval Ala-588–Pro-919. The segment at Arg-693–Phe-713 is disordered. Ser-726 is subject to Phosphoserine. The segment at Ser-729–Asn-750 is disordered. A compositionally biased stretch (polar residues) spans Ser-739–Asn-750.

Its subcellular location is the cytoplasm. It localises to the nucleus. The polypeptide is DENN domain-containing protein C297.05 (Schizosaccharomyces pombe (strain 972 / ATCC 24843) (Fission yeast)).